The sequence spans 445 residues: 3-phosphoshikimate 1-carboxyvinyltransferase (445 aa).

3 residues coordinate 3-phosphoshikimate: Lys-21, Ser-22, and Arg-26. Lys-21 provides a ligand contact to phosphoenolpyruvate. Positions 92 and 120 each coordinate phosphoenolpyruvate. 3-phosphoshikimate-binding residues include Ser-165, Gln-166, Asp-307, and Lys-334. Phosphoenolpyruvate is bound at residue Gln-166. Residue Asp-307 is the Proton acceptor of the active site. Residues Arg-338, Arg-379, and Lys-405 each contribute to the phosphoenolpyruvate site.

It belongs to the EPSP synthase family. In terms of assembly, monomer.

The protein resides in the cytoplasm. It carries out the reaction 3-phosphoshikimate + phosphoenolpyruvate = 5-O-(1-carboxyvinyl)-3-phosphoshikimate + phosphate. It participates in metabolic intermediate biosynthesis; chorismate biosynthesis; chorismate from D-erythrose 4-phosphate and phosphoenolpyruvate: step 6/7. Catalyzes the transfer of the enolpyruvyl moiety of phosphoenolpyruvate (PEP) to the 5-hydroxyl of shikimate-3-phosphate (S3P) to produce enolpyruvyl shikimate-3-phosphate and inorganic phosphate. This Chlamydia abortus (strain DSM 27085 / S26/3) (Chlamydophila abortus) protein is 3-phosphoshikimate 1-carboxyvinyltransferase.